Consider the following 700-residue polypeptide: Glycine--tRNA ligase beta subunit (700 aa).

It belongs to the class-II aminoacyl-tRNA synthetase family. In terms of assembly, tetramer of two alpha and two beta subunits.

The protein resides in the cytoplasm. It carries out the reaction tRNA(Gly) + glycine + ATP = glycyl-tRNA(Gly) + AMP + diphosphate. The polypeptide is Glycine--tRNA ligase beta subunit (Helicobacter pylori (strain Shi470)).